A 360-amino-acid polypeptide reads, in one-letter code: G-box-binding factor 2 (360 aa).

Residues 1–16 (MGSNEEGNPTNNSDKP) are compositionally biased toward polar residues. 2 disordered regions span residues 1–26 (MGSN…EQSN) and 150–275 (KVGS…AETE). Positions 164–184 (SQSSENDGSSNGSDGNTTGGE) are enriched in low complexity. A compositionally biased stretch (polar residues) spans 198–208 (TGERPSSQNSL). Residues 246–264 (NEKEVKREKRKQSNRESAR) show a composition bias toward basic and acidic residues. In terms of domain architecture, bZIP spans 249–312 (EVKREKRKQS…EKLRLENEAI (64 aa)). The basic motif stretch occupies residues 251–270 (KREKRKQSNRESARRSRLRK). The tract at residues 277–312 (LSVKVDALVAENMSLRSKLGQLNNESEKLRLENEAI) is leucine-zipper. Positions 335-352 (NSVSGSKTVQHQLLNASP) are enriched in polar residues. The segment at 335–360 (NSVSGSKTVQHQLLNASPITDPVAAS) is disordered.

This sequence belongs to the bZIP family. In terms of assembly, DNA-binding heterodimer. Interacts with GBF4. Interacts with BZIP16 and BZIP68. In terms of tissue distribution, found in both light and dark grown leaves.

Its subcellular location is the nucleus. In terms of biological role, binds to the G-box motif (5'-CCACGTGG-3') of the rbcS-1A gene promoter. G-box and G-box-like motifs are cis-acting elements defined in promoters of certain plant genes which are regulated by such diverse stimuli as light-induction or hormone control. GBF2 is found to bind asymmetrically to the G-box. In Arabidopsis thaliana (Mouse-ear cress), this protein is G-box-binding factor 2 (GBF2).